The following is a 1337-amino-acid chain: DNA-directed RNA polymerase subunit beta' (1337 aa).

4 residues coordinate Zn(2+): cysteine 60, cysteine 62, cysteine 75, and cysteine 78. 3 residues coordinate Mg(2+): aspartate 536, aspartate 538, and aspartate 540. Residues cysteine 895, cysteine 974, cysteine 981, and cysteine 984 each contribute to the Zn(2+) site.

This sequence belongs to the RNA polymerase beta' chain family. The RNAP catalytic core consists of 2 alpha, 1 beta, 1 beta' and 1 omega subunit. When a sigma factor is associated with the core the holoenzyme is formed, which can initiate transcription. Mg(2+) is required as a cofactor. The cofactor is Zn(2+).

The enzyme catalyses RNA(n) + a ribonucleoside 5'-triphosphate = RNA(n+1) + diphosphate. Its function is as follows. DNA-dependent RNA polymerase catalyzes the transcription of DNA into RNA using the four ribonucleoside triphosphates as substrates. The sequence is that of DNA-directed RNA polymerase subunit beta' from Bifidobacterium adolescentis (strain ATCC 15703 / DSM 20083 / NCTC 11814 / E194a).